We begin with the raw amino-acid sequence, 317 residues long: Melanocyte-stimulating hormone receptor (317 aa).

Topologically, residues 1-37 (MPVQGSQRRLLGSLNSTPTATPHLGLAANQTGARCLE) are extracellular. Asn-29 is a glycosylation site (N-linked (GlcNAc...) asparagine). Residues 38 to 63 (VSIPDGLFLSLGLVSLVENVLVVTAI) form a helical membrane-spanning segment. Residues 64-72 (AKNRNLHSP) lie on the Cytoplasmic side of the membrane. The helical transmembrane segment at 73-93 (MYCFICCLALSDLLVSGSNML) threads the bilayer. Topologically, residues 94 to 118 (ETAVILLLEAGALAARAAVVQQLDN) are extracellular. The chain crosses the membrane as a helical span at residues 119–140 (VIDVITCSSMLSSLCFLGAIAV). Residues 141 to 163 (DRYISIFYALRYHSIVTLPRARR) lie on the Cytoplasmic side of the membrane. The chain crosses the membrane as a helical span at residues 164-183 (AVAAIWVASVLFSMLFIAYY). Residues 184 to 191 (DHAAVLLC) lie on the Extracellular side of the membrane. The chain crosses the membrane as a helical span at residues 192-211 (LVVFFLAMLVLMAVLYVHML). The Cytoplasmic segment spans residues 212 to 240 (ARACQHAQGIARLHKRQRPAHQSFGLKGA). Residues 241-266 (ATLTILLGIFFLCWGPFFLHLTLIVL) form a helical membrane-spanning segment. The Extracellular portion of the chain corresponds to 267-279 (CPQHPTCSCIFKN). The chain crosses the membrane as a helical span at residues 280 to 300 (FNLFLTLIICNAIIDPLIYAF). Residues 301 to 317 (RSQELRRTLKEVLLCSW) are Cytoplasmic-facing. A lipid anchor (S-palmitoyl cysteine) is attached at Cys-315.

The protein belongs to the G-protein coupled receptor 1 family. As to quaternary structure, interacts with MGRN1, but does not undergo MGRN1-mediated ubiquitination; this interaction competes with GNAS-binding and thus inhibits agonist-induced cAMP production. Interacts with OPN3; the interaction results in a decrease in MC1R-mediated cAMP signaling and ultimately a decrease in melanin production in melanocytes.

The protein localises to the cell membrane. In terms of biological role, receptor for MSH (alpha, beta and gamma) and ACTH. The activity of this receptor is mediated by G proteins which activate adenylate cyclase. Mediates melanogenesis, the production of eumelanin (black/brown) and phaeomelanin (red/yellow), via regulation of cAMP signaling in melanocytes. The chain is Melanocyte-stimulating hormone receptor (MC1R) from Erythrocebus patas (Red guenon).